The chain runs to 529 residues: CTP synthase (529 aa).

An amidoligase domain region spans residues 1–266 (MTKYIIVTGG…TKKIFNKLGL (266 aa)). Ser-13 is a CTP binding site. UTP is bound at residue Ser-13. 14-19 (SVGKGT) lines the ATP pocket. Tyr-54 contributes to the L-glutamine binding site. Residue Asp-71 participates in ATP binding. Mg(2+) is bound by residues Asp-71 and Glu-141. CTP contacts are provided by residues 148–150 (DIE), 187–192 (KTKPLQ), and Lys-223. Residues 187 to 192 (KTKPLQ) and Lys-223 contribute to the UTP site. In terms of domain architecture, Glutamine amidotransferase type-1 spans 291 to 529 (KIALVGKYTK…FLNFLSVASA (239 aa)). Gly-354 contacts L-glutamine. The active-site Nucleophile; for glutamine hydrolysis is Cys-381. Residues 382-385 (FGMQ), Glu-405, and Arg-462 contribute to the L-glutamine site. Active-site residues include His-506 and Glu-508.

This sequence belongs to the CTP synthase family. As to quaternary structure, homotetramer.

The enzyme catalyses UTP + L-glutamine + ATP + H2O = CTP + L-glutamate + ADP + phosphate + 2 H(+). It catalyses the reaction L-glutamine + H2O = L-glutamate + NH4(+). It carries out the reaction UTP + NH4(+) + ATP = CTP + ADP + phosphate + 2 H(+). It participates in pyrimidine metabolism; CTP biosynthesis via de novo pathway; CTP from UDP: step 2/2. Allosterically activated by GTP, when glutamine is the substrate; GTP has no effect on the reaction when ammonia is the substrate. The allosteric effector GTP functions by stabilizing the protein conformation that binds the tetrahedral intermediate(s) formed during glutamine hydrolysis. Inhibited by the product CTP, via allosteric rather than competitive inhibition. In terms of biological role, catalyzes the ATP-dependent amination of UTP to CTP with either L-glutamine or ammonia as the source of nitrogen. Regulates intracellular CTP levels through interactions with the four ribonucleotide triphosphates. The chain is CTP synthase from Sulfolobus acidocaldarius (strain ATCC 33909 / DSM 639 / JCM 8929 / NBRC 15157 / NCIMB 11770).